Here is a 95-residue protein sequence, read N- to C-terminus: Aspartyl/glutamyl-tRNA(Asn/Gln) amidotransferase subunit C (95 aa).

This sequence belongs to the GatC family. Heterotrimer of A, B and C subunits.

It carries out the reaction L-glutamyl-tRNA(Gln) + L-glutamine + ATP + H2O = L-glutaminyl-tRNA(Gln) + L-glutamate + ADP + phosphate + H(+). The catalysed reaction is L-aspartyl-tRNA(Asn) + L-glutamine + ATP + H2O = L-asparaginyl-tRNA(Asn) + L-glutamate + ADP + phosphate + 2 H(+). Its function is as follows. Allows the formation of correctly charged Asn-tRNA(Asn) or Gln-tRNA(Gln) through the transamidation of misacylated Asp-tRNA(Asn) or Glu-tRNA(Gln) in organisms which lack either or both of asparaginyl-tRNA or glutaminyl-tRNA synthetases. The reaction takes place in the presence of glutamine and ATP through an activated phospho-Asp-tRNA(Asn) or phospho-Glu-tRNA(Gln). This is Aspartyl/glutamyl-tRNA(Asn/Gln) amidotransferase subunit C from Rhizobium johnstonii (strain DSM 114642 / LMG 32736 / 3841) (Rhizobium leguminosarum bv. viciae).